We begin with the raw amino-acid sequence, 812 residues long: Valine--tRNA ligase (812 aa).

Positions 46–56 match the 'HIGH' region motif; the sequence is PTVSGQLHIGH. Positions 536-540 match the 'KMSKS' region motif; sequence KMSKS. Lys-539 provides a ligand contact to ATP.

It belongs to the class-I aminoacyl-tRNA synthetase family. ValS type 2 subfamily. In terms of assembly, monomer.

The protein localises to the cytoplasm. It carries out the reaction tRNA(Val) + L-valine + ATP = L-valyl-tRNA(Val) + AMP + diphosphate. Catalyzes the attachment of valine to tRNA(Val). As ValRS can inadvertently accommodate and process structurally similar amino acids such as threonine, to avoid such errors, it has a 'posttransfer' editing activity that hydrolyzes mischarged Thr-tRNA(Val) in a tRNA-dependent manner. The polypeptide is Valine--tRNA ligase (Rickettsia bellii (strain OSU 85-389)).